Reading from the N-terminus, the 591-residue chain is Indole-3-acetic acid-amido synthetase GH3.10 (591 aa).

The protein belongs to the IAA-amido conjugating enzyme family. As to expression, expressed in cotyledons and hypocotyls.

In terms of biological role, catalyzes the synthesis of indole-3-acetic acid (IAA)-amino acid conjugates, providing a mechanism for the plant to cope with the presence of excess auxin. Involved in red light-specific hypocotyl elongation. May act downstream of a red light signal transduction and determine the degree of hypocotyl elongation. The sequence is that of Indole-3-acetic acid-amido synthetase GH3.10 from Arabidopsis thaliana (Mouse-ear cress).